Here is a 1402-residue protein sequence, read N- to C-terminus: Roundabout homolog 3 (1402 aa).

An N-terminal signal peptide occupies residues M1–A20. At R21 to P891 the chain is on the extracellular side. N-linked (GlcNAc...) asparagine glycans are attached at residues N25, N34, and N53. 5 Ig-like C2-type domains span residues P64–E160, D166–V253, P258–S342, P347–E440, and P450–T531. A disulfide bridge links C85 with C143. N156 is a glycosylation site (N-linked (GlcNAc...) asparagine). 2 disulfide bridges follow: C187/C236 and C279/C326. N-linked (GlcNAc...) asparagine glycosylation is found at N355, N363, N410, N459, and N503. C368 and C424 are oxidised to a cystine. Cysteines 472 and 521 form a disulfide. Disordered stretches follow at residues E540–Q561 and E639–W662. Positions G543–P552 are enriched in low complexity. 3 consecutive Fibronectin type-III domains span residues P558 to S652, A672 to E766, and P771 to A869. The span at P646 to S655 shows a compositional bias: polar residues. Residues N784, N813, and N820 are each glycosylated (N-linked (GlcNAc...) asparagine). Residues A892–L912 traverse the membrane as a helical segment. At Y913 to R1402 the chain is on the cytoplasmic side. Disordered stretches follow at residues S965–P989, F1032–A1307, and G1340–R1402. Polar residues-rich tracts occupy residues Q1038–Q1049 and P1142–S1152. Residues P1158–D1169 show a composition bias toward pro residues. Low complexity-rich tracts occupy residues R1178 to S1191 and A1215 to P1228. A compositionally biased stretch (basic residues) spans H1243–K1254. The residue at position 1263 (S1263) is a Phosphoserine. The segment covering L1294–V1304 has biased composition (basic and acidic residues). Polar residues predominate over residues S1346 to A1357. Residues G1358–S1371 are compositionally biased toward low complexity.

Belongs to the immunoglobulin superfamily. ROBO family. In terms of assembly, interacts (via Fibronectin type-III 1 domain) with NELL2 (via the EGF domains) with a 3:3 stoichiometry; this interaction promotes oligomerization of ROBO3 resulting in the repulsion of commissural axons in the midline. In terms of tissue distribution, detected in embryonal spinal cord and hindbrain.

Its subcellular location is the membrane. In terms of biological role, receptor involved in axon guidance during development. Acts as a multifunctional regulator of pathfinding that simultaneously mediates NELL2 repulsion, inhibits SLIT repulsion, and facilitates Netrin-1/NTN1 attraction. In spinal cord development plays a role in guiding commissural axons probably by preventing premature sensitivity to Slit proteins thus inhibiting Slit signaling through ROBO1/ROBO2. Binding OF NELL2 to the receptor ROBO3 promotes oligomerization of ROBO3, resulting in the repulsion of commissural axons in the midline. ROBO3 also indirectly boosts axon attraction to NTN1 without interacting with NTN1 itself. Its function is as follows. Mediates NELL2 premature repulsion of commissural axons during midline crossing. After midline crossing by the commissural axons, may, in concert with ROBO1 and ROBO2, prevent midline recrossing. Does not mediate NELL2 signaling. This chain is Roundabout homolog 3, found in Mus musculus (Mouse).